A 67-amino-acid chain; its full sequence is Large ribosomal subunit protein uL29 (67 aa).

Belongs to the universal ribosomal protein uL29 family.

The sequence is that of Large ribosomal subunit protein uL29 from Wolbachia pipientis subsp. Culex pipiens (strain wPip).